The following is a 469-amino-acid chain: NADH-quinone oxidoreductase subunit N (469 aa).

The next 14 membrane-spanning stretches (helical) occupy residues isoleucine 2–valine 22, arginine 28–valine 48, phenylalanine 70–phenylalanine 90, glutamate 101–glutamate 121, leucine 122–methionine 142, phenylalanine 157–valine 177, phenylalanine 194–phenylalanine 214, glycine 233–leucine 253, isoleucine 261–serine 281, isoleucine 290–glycine 310, isoleucine 315–isoleucine 335, alanine 361–leucine 381, leucine 398–isoleucine 418, and isoleucine 447–phenylalanine 467.

The protein belongs to the complex I subunit 2 family. NDH-1 is composed of 14 different subunits. Subunits NuoA, H, J, K, L, M, N constitute the membrane sector of the complex.

The protein localises to the cell inner membrane. The enzyme catalyses a quinone + NADH + 5 H(+)(in) = a quinol + NAD(+) + 4 H(+)(out). Functionally, NDH-1 shuttles electrons from NADH, via FMN and iron-sulfur (Fe-S) centers, to quinones in the respiratory chain. The immediate electron acceptor for the enzyme in this species is believed to be ubiquinone. Couples the redox reaction to proton translocation (for every two electrons transferred, four hydrogen ions are translocated across the cytoplasmic membrane), and thus conserves the redox energy in a proton gradient. This chain is NADH-quinone oxidoreductase subunit N, found in Campylobacter fetus subsp. fetus (strain 82-40).